We begin with the raw amino-acid sequence, 120 residues long: Host cell factor C1 regulator 1 (120 aa).

Residues 1–30 (MILQQPLERGPPSRDPRATTGVTRGLNASL) are disordered. Over residues 20-30 (TGVTRGLNASL) the composition is skewed to polar residues. Residues 58–61 (DHPY) form an interaction with HCFC1 region. A Nuclear export signal motif is present at residues 92-101 (IPEALRLLRL).

As to quaternary structure, interacts with HCFC1.

It is found in the cytoplasm. It localises to the nucleus. Its function is as follows. Regulates HCFC1 activity by modulating its subcellular localization. Overexpression of HCFC1R1 leads to accumulation of HCFC1 in the cytoplasm. HCFC1R1-mediated export may provide the pool of cytoplasmic HCFC1 required for import of virion-derived VP16 into the nucleus. This chain is Host cell factor C1 regulator 1 (Hcfc1r1), found in Mus musculus (Mouse).